A 435-amino-acid polypeptide reads, in one-letter code: MKHVLKWISDLRVAIFLLLIIALSSSLGTALPQKESAESYYEAYNSSPWLKVFSGESIIQLQLDHVYSSDWFLSLLLWLGIALVFCSWRRQLPALQFTLRWIDYCNPRQLSKLALAETIISTDASASIKRLEQLLKNQGWQVQAKSGRLAARRGIAGRVGPLMVHTGLVILMLGAVWGVLGGHRLERFLAPGREMELLNSHGKSQLNIALESFQIERDPVGRPEQYRSQLRLRELGNSRENNSGSIDKSLNREISVNHPLRYGGMTVYQADWALAAITVQLGRSPLLQLPLEQFPQLGEQVWGVVLPTQQDGSNPVLLALSSEKGPIEVFASDGSLITTLRPGGVAATINDVKVRVESILPASGLLLKRDPGVPLVYIGFAVALMGGGLSLISTRQIWAIAELEQQRFHVGGLCNREFTNFAQELPQFISEIQQI.

3 consecutive transmembrane segments (helical) span residues 11–31 (LRVA…GTAL), 69–89 (SDWF…CSWR), and 159–179 (VGPL…VWGV).

It belongs to the Ccs1/CcsB family. As to quaternary structure, may interact with CcsA.

Its subcellular location is the plastid. It is found in the organellar chromatophore thylakoid membrane. Its function is as follows. Required during biogenesis of c-type cytochromes (cytochrome c6 and cytochrome f) at the step of heme attachment. This is Cytochrome c biogenesis protein CcsB from Paulinella chromatophora.